The sequence spans 497 residues: L-carnitine dehydrogenase/betainyl-CoA thioesterase (497 aa).

The tract at residues 1–335 (MSFITKAACV…AKLWANARKP (335 aa)) is L-carnitine dehydrogenase. NAD(+) is bound at residue 11-16 (GGGVIG). Residues 330–335 (ANARKP) are important for dehydrogenase activity. The segment at 336–497 (EADLGDVKPL…AGRFVGQKRA (162 aa)) is betainyl-CoA thioesterase.

It in the N-terminal section; belongs to the 3-hydroxyacyl-CoA dehydrogenase family. L-carnitine dehydrogenase subfamily. In the C-terminal section; belongs to the betainyl-CoA thioesterase family. In terms of assembly, homodimer.

The protein resides in the cytoplasm. The catalysed reaction is carnitine + NAD(+) = 3-dehydrocarnitine + NADH + H(+). The enzyme catalyses N,N,N-trimethylglycyl-CoA + H2O = glycine betaine + CoA + H(+). It participates in amine and polyamine metabolism; carnitine metabolism. Functionally, catalyzes the NAD(+)-dependent oxidation of L-carnitine to 3-dehydrocarnitine. Probably also catalyzes the cleavage of betainyl-CoA (N,N,N-trimethylglycyl-CoA) into glycine betaine and coenzyme A. Despite a high similarity to 3-hydroxyacyl-CoA dehydrogenases, cannot dehydrogenate 3-hydroxybutylate and 3-hydroxybutyl-CoA. Is probably involved in a L-carnitine degradation pathway that allows Rhizobium sp. YS-240 to grow on L-carnitine as the sole source of carbon and nitrogen. This is L-carnitine dehydrogenase/betainyl-CoA thioesterase from Rhizobium sp.